We begin with the raw amino-acid sequence, 924 residues long: Phosphatidate phosphatase LPIN1 (924 aa).

The interval 1 to 108 (MNYVGQLAGQ…IPMYLATSPI (108 aa)) is N-LIP. S106 and S150 each carry phosphoserine. 2 disordered regions span residues 133 to 248 (PTTA…DCQR) and 269 to 297 (FHASESPSGSRPSTPKSDSELVSKSADRL). The span at 152-161 (GKKRRKRRRK) shows a compositional bias: basic residues. Residues 153 to 158 (KKRRKR) carry the Nuclear localization signal motif. Positions 162–172 (AQLDNLKRDDN) are enriched in basic and acidic residues. Residues 176-193 (SEDEDMFPIEMSSDEDTA) are compositionally biased toward acidic residues. Polar residues-rich tracts occupy residues 218–229 (PSISTHPQSASY) and 273–284 (ESPSGSRPSTPK). A phosphoserine mark is found at S285, S287, and S293. The segment covering 285 to 297 (SDSELVSKSADRL) has biased composition (basic and acidic residues). T298 carries the phosphothreonine modification. 2 disordered regions span residues 314–426 (QAAK…SRHL) and 446–490 (LYFP…STSD). S328 carries the phosphoserine modification. Residues 343 to 358 (AIHSESSDTFSDQSPT) show a composition bias toward polar residues. At S392 the chain carries Phosphoserine. The span at 404–413 (NTAQSSSKTD) shows a compositional bias: polar residues. Position 459 is an N6-acetyllysine (K459). Residues 461-476 (ASDNGARSANQSPQSV) are compositionally biased toward polar residues. Phosphoserine occurs at positions 468, 472, and 483. Glycyl lysine isopeptide (Lys-Gly) (interchain with G-Cter in SUMO) cross-links involve residues K599 and K629. The tract at residues 627–649 (RIKHESSSSDEEHAAAKPSGSSH) is disordered. Basic and acidic residues predominate over residues 628–641 (IKHESSSSDEEHAA). K629 bears the N6-acetyllysine mark. Residues S634 and S635 each carry the phosphoserine modification. Residues 658–864 (YKKTLRLTSE…VNPKGELVQE (207 aa)) are C-LIP. The short motif at 712-716 (DIDGT) is the DXDXT motif element. The LXXIL motif motif lies at 723 to 727 (LGHIL). Phosphoserine is present on residues S921 and S923.

This sequence belongs to the lipin family. Interacts (via LXXIL motif) with PPARA. Interacts with PPARGC1A. Interaction with PPARA and PPARGC1A leads to the formation of a complex that modulates gene transcription. Interacts with MEF2C. Requires Mg(2+) as cofactor. In terms of processing, phosphorylated at multiple sites in response to insulin. Phosphorylation is controlled by the mTOR signaling pathway. Phosphorylation is decreased by epinephrine. Phosphorylation may not directly affect the catalytic activity but may regulate the localization. Dephosphorylated by the CTDNEP1-CNEP1R1 complex. Phosphorylated at multiple sites by mTOR in response to insulin, leading to its inactivation. Phosphorylation does not affect the catalytic activity but regulates the localization. Phosphorylation is decreased by epinephrine. Dephosphorylated by the CTDNEP1-CNEP1R1 complex. Dephosphorylation following mTOR inhibition promotes its activity. Post-translationally, sumoylation is important in brain and is marginal in other tissues. Sumoylation facilitates nuclear localization of isoform 2 in neuronals cells and its transcriptional coactivator activity. In terms of processing, acetylation at Lys-459 and Lys-629 by KAT5 in response to fatty acids promotes translocation to the endoplasmic reticulum and synthesis of diacylglycerol. Specifically expressed in skeletal muscle. Also expressed prominently in adipose tissue, and testis. Lower expression also detected in kidney, lung, brain and liver. As to expression, predominant isoform in the liver. In terms of tissue distribution, predominant isoform in the brain.

The protein localises to the mitochondrion outer membrane. Its subcellular location is the cytoplasm. The protein resides in the nucleus membrane. It localises to the nucleus. It is found in the endoplasmic reticulum membrane. It catalyses the reaction a 1,2-diacyl-sn-glycero-3-phosphate + H2O = a 1,2-diacyl-sn-glycerol + phosphate. The catalysed reaction is 1-octadecanoyl-2-(4Z,7Z,10Z,13Z,16Z,19Z-docosahexaenoyl)-sn-glycero-3-phosphate + H2O = 1-octadecanoyl-2-(4Z,7Z,10Z,13Z,16Z,19Z-docosahexaenoyl)-sn-glycerol + phosphate. The enzyme catalyses 1-octadecanoyl-2-(5Z,8Z,11Z,14Z-eicosatetraenoyl)-sn-glycero-3-phosphate + H2O = 1-octadecanoyl-2-(5Z,8Z,11Z,14Z-eicosatetraenoyl)-sn-glycerol + phosphate. It carries out the reaction 1-octadecanoyl-2-(9Z,12Z-octadecadienoyl)-sn-glycero-3-phosphate + H2O = 1-octadecanoyl-2-(9Z,12Z)-octadecadienoyl-sn-glycerol + phosphate. It catalyses the reaction 1-octadecanoyl-2-(9Z-octadecenoyl)-sn-glycero-3-phosphate + H2O = 1-octadecanoyl-2-(9Z-octadecenoyl)-sn-glycerol + phosphate. The catalysed reaction is 1-hexadecanoyl-2-(4Z,7Z,10Z,13Z,16Z,19Z-docosahexaenoyl)-sn-glycero-3-phosphate + H2O = 1-hexadecanoyl-2-(4Z,7Z,10Z,13Z,16Z,19Z-docosahexaenoyl)-sn-glycerol + phosphate. The enzyme catalyses 1,2-dioctadecanoyl-sn-glycero-3-phosphate + H2O = 1,2-dioctadecanoyl-sn-glycerol + phosphate. It carries out the reaction 1-hexadecanoyl-2-(5Z,8Z,11Z,14Z-eicosatetraenoyl)-sn-glycero-3-phosphate + H2O = 1-hexadecanoyl-2-(5Z,8Z,11Z,14Z-eicosatetraenoyl)-sn-glycerol + phosphate. It catalyses the reaction 1-hexadecanoyl-2-(9Z,12Z-octadecadienoyl)-sn-glycero-3-phosphate + H2O = 1-hexadecanoyl-2-(9Z,12Z-octadecadienoyl)-sn-glycerol + phosphate. The catalysed reaction is 1-hexadecanoyl-2-(9Z-octadecenoyl)-sn-glycero-3-phosphate + H2O = 1-hexadecanoyl-2-(9Z-octadecenoyl)-sn-glycerol + phosphate. The enzyme catalyses 1,2-di-(4Z,7Z,10Z,13Z,16Z,19Z-docosahexaenoyl)-sn-glycero-3-phosphate + H2O = 1,2-di-(4Z,7Z,10Z,13Z,16Z,19Z-docosahexaenoyl)-sn-glycerol + phosphate. It carries out the reaction 1,2-di-(5Z,8Z,11Z,14Z)-eicosatetraenoyl-sn-glycero-3-phosphate + H2O = 1,2-di-(5Z,8Z,11Z,14Z)-eicosatetraenoyl-sn-glycerol + phosphate. It catalyses the reaction 1,2-di-(9Z,12Z-octadecadienoyl)-sn-glycero-3-phosphate + H2O = 1,2-di-(9Z,12Z-octadecadienoyl)-sn-glycerol + phosphate. The catalysed reaction is 1,2-di-(9Z-octadecenoyl)-sn-glycero-3-phosphate + H2O = 1,2-di-(9Z-octadecenoyl)-sn-glycerol + phosphate. The enzyme catalyses 1,2-dihexadecanoyl-sn-glycero-3-phosphate + H2O = 1,2-dihexadecanoyl-sn-glycerol + phosphate. Inhibited by N-ethylmaleimide treatment. Acts as a magnesium-dependent phosphatidate phosphatase enzyme which catalyzes the conversion of phosphatidic acid to diacylglycerol during triglyceride, phosphatidylcholine and phosphatidylethanolamine biosynthesis and therefore controls the metabolism of fatty acids at different levels. Is involved in adipocyte differentiation. Also acts as nuclear transcriptional coactivator for PPARGC1A/PPARA regulatory pathway to modulate lipid metabolism gene expression. In terms of biological role, recruited at the mitochondrion outer membrane and is involved in mitochondrial fission by converting phosphatidic acid to diacylglycerol. The chain is Phosphatidate phosphatase LPIN1 (Lpin1) from Mus musculus (Mouse).